The following is an 87-amino-acid chain: uncharacterized protein (87 aa).

This sequence to A.fulgidus AF_0255 and AF_1348.

This is an uncharacterized protein from Archaeoglobus fulgidus (strain ATCC 49558 / DSM 4304 / JCM 9628 / NBRC 100126 / VC-16).